The sequence spans 1388 residues: MSLDELFTVRSTATANATQIRNLKAIQISIASPENIREWSYGEVKKPETINYRTFKPERDGLFCAKIFGPVKDYECNCGKYKRMKHRGIVCEKCGVEVIASKVRRERMGHIELAAPVAHIWFLKTLPSKIGTLLDMAMADLEKVLYFDSYIVLDPGSTNLTKMQVISEDQYLQVIEHINEESFVVGMGAEAIRGLLEELNLETLRNSLREESQSTKSQTKKKKLTKRLKVVEAFIESGNRPEWMIMEVIPVIPPELRPLVPLDGGRFATSDLNDLYRRVINRNNRLKRLMELGAPEIIIRNEKRMLQEAVDALFDNGRRGRAIAGTNGRPLKSLSDMIKGKQGRFRQNLLGKRVDYSGRSVIVVGPKLKLHQCGLPKKMALELFKPFIYSELEKRGHASTIKSAKKIVEREELVVWDILSDVVREYPILLNRAPTLHRLGIQAFEPLLVEGKAIQLHPLVCAAYNADFDGDQMAVHIPLSVEAQVECRVLMMSTNNILSPANGSPVIVPSQDIVLGLYYMTVERSFEKGEGMVFCAPWEVISAIDNNQVNIHAKIKVRMEDGNIYNTTAGRILVWEGLPKGLKFEYVNCVLTKKNIATLVGNAYRDAGIKATVILCDRLKDIGYEYATRAGITIGVKDLIIPATKKTIIDTATSEVDDIERQYRDGIITRTEKYNKVVDVWTKATQDISSEMTKEISTEVVKDPKTERTEVNQSFNPIFMMSNSGARGNQDQMRQLAGMRGLMAKPSGEIIETPITSNFREGLTVLQYFTSTHGARKGLADTALKTANSGYLTRRLVDVVQDVIVYKNDCGTVDGIEVKQVQDGGEIKQNLSERILGRVLLYPIYHPVTNEIIFPENTLIDEYVVKKLEEIGIASVTIRSALTCQSERGVCALCYGRDLARGHLVNIGETVGIIAAQSIGEPGTQLTMRTFHIGGTASREIERSNFEALHSGRIVLTRVKSVENRDGVHLVIGKSGQLSIVDEQGRERERYSLPNGARLYVKEGQEVTKGTFLAEWDPFNEPFVSEVNGFIKFTDLIDGKTYQEKLDEATHQSSMTIIEYRTTSFRPSISICDAEGQTKQRITSTTPAIYSLPAGAIIMVKDGQEVQAGDIIARKPRETSKTRDIVGGLPRVAELFEVRKPKDMAVVSEIAGIVTYAGESKGKRKLIVTPEIGDPKEYLIPKGKHINVSDGDFVEAGDLLTEGHPELHDILKTRGEKYLAAYLVDEIQEVYRFQGVGIDDKHIEVIVRQMLRKITVTNPGGTTFLVGEQVDKGDFKEENQKIVEEGLEPATAEPLVLGITQASLTTSSFISAASFQETTKVLTEASLKGKMDYLRGLKENVIVGRLIPAGTGYREYMELDIVVPEQKERPNKFLEELEERPVLIEIDS.

Positions 76, 78, 91, and 94 each coordinate Zn(2+). Residues D467, D469, and D471 each coordinate Mg(2+). Zn(2+) contacts are provided by C810, C884, C891, and C894.

Belongs to the RNA polymerase beta' chain family. In terms of assembly, the RNAP catalytic core consists of 2 alpha, 1 beta, 1 beta' and 1 omega subunit. When a sigma factor is associated with the core the holoenzyme is formed, which can initiate transcription. Mg(2+) serves as cofactor. Zn(2+) is required as a cofactor.

The enzyme catalyses RNA(n) + a ribonucleoside 5'-triphosphate = RNA(n+1) + diphosphate. Its function is as follows. DNA-dependent RNA polymerase catalyzes the transcription of DNA into RNA using the four ribonucleoside triphosphates as substrates. The polypeptide is DNA-directed RNA polymerase subunit beta' (Lawsonia intracellularis (strain PHE/MN1-00)).